The primary structure comprises 310 residues: uncharacterized protein (310 aa).

2 disordered regions span residues 22-163 (LARQ…PVEH) and 178-209 (EAEA…VEGD). 2 stretches are compositionally biased toward basic and acidic residues: residues 56–66 (IIRDDHHHAGP) and 183–197 (TEVR…ERHA). Residues 198–209 (AAAAAGTDVEGD) show a composition bias toward low complexity. Helical transmembrane passes span 231–251 (ALVV…FIAF), 257–277 (WNSI…VVSV), and 286–306 (IAST…PLAL).

The protein to M.leprae ML2433.

The protein localises to the cell membrane. This is an uncharacterized protein from Mycobacterium tuberculosis (strain CDC 1551 / Oshkosh).